A 419-amino-acid chain; its full sequence is Cytosine permease (419 aa).

Residues 1–19 (MSQDNNFSQGPVPQSARKG) lie on the Cytoplasmic side of the membrane. Residues 20 to 39 (VLALTFVMLGLTFFSASMWT) form a helical membrane-spanning segment. The Periplasmic portion of the chain corresponds to 40 to 51 (GGTLGTGLSYHD). Residues 52–71 (FFLAVLIGNLLLGIYTSFLG) traverse the membrane as a helical segment. At 72–100 (YIGAKTGLTTHLLARFSFGVKGSWLPSLL) the chain is on the cytoplasmic side. A helical membrane pass occupies residues 101-120 (LGGTQVGWFGVGVAMFAIPV). The Periplasmic segment spans residues 121–127 (GKATGLD). The helical transmembrane segment at 128-147 (INLLIAVSGLLMTVTVFFGI) threads the bilayer. The Cytoplasmic portion of the chain corresponds to 148–152 (SALTV). The helical transmembrane segment at 153–172 (LSLIAVPAIACLGGYSVWLA) threads the bilayer. Topologically, residues 173–192 (VNGMGGLDALKAVVPAQPLD) are periplasmic. The chain crosses the membrane as a helical span at residues 193 to 212 (FNVALALVVGSFISAGTLTA). Residues 213 to 221 (DFVRFGRNA) are Cytoplasmic-facing. The chain crosses the membrane as a helical span at residues 222-242 (KLAVLVAMVAFFLGNSLMFIF). Over 243–257 (GAAGAAALGMADISD) the chain is Periplasmic. A helical transmembrane segment spans residues 258 to 277 (VMIAQGLLLPAIVVLGLNIW). At 278–300 (TTNDNALYASGLGFANITGMSSK) the chain is on the cytoplasmic side. Residues 301–320 (TLSVINGIIGTVCALWLYNN) form a helical membrane-spanning segment. Phe321 is a topological domain (periplasmic). Residues 322–341 (VGWLTFLSAAIPPVGGVIIA) form a helical membrane-spanning segment. Residues 342-358 (DYLMNRRRYEHFATTRM) are Cytoplasmic-facing. The helical transmembrane segment at 359 to 378 (MSVNWVAILAVALGIAAGHW) threads the bilayer. Topologically, residues 379–380 (LP) are periplasmic. The helical transmembrane segment at 381 to 400 (GIVPVNAVLGGALSYLILNP) threads the bilayer. Over 401 to 419 (ILNRKTTAAMTHVEANSVE) the chain is Cytoplasmic.

This sequence belongs to the purine-cytosine permease (2.A.39) family.

The protein resides in the cell inner membrane. Required for cytosine transport into the cell. The protein is Cytosine permease (codB) of Escherichia coli O157:H7.